The following is a 259-amino-acid chain: Tryptophan synthase alpha chain (259 aa).

Active-site proton acceptor residues include Glu52 and Asp63.

It belongs to the TrpA family. In terms of assembly, tetramer of two alpha and two beta chains.

The catalysed reaction is (1S,2R)-1-C-(indol-3-yl)glycerol 3-phosphate + L-serine = D-glyceraldehyde 3-phosphate + L-tryptophan + H2O. It functions in the pathway amino-acid biosynthesis; L-tryptophan biosynthesis; L-tryptophan from chorismate: step 5/5. Its function is as follows. The alpha subunit is responsible for the aldol cleavage of indoleglycerol phosphate to indole and glyceraldehyde 3-phosphate. The polypeptide is Tryptophan synthase alpha chain (Streptococcus sanguinis (strain SK36)).